We begin with the raw amino-acid sequence, 239 residues long: 1-(5-phosphoribosyl)-5-[(5-phosphoribosylamino)methylideneamino] imidazole-4-carboxamide isomerase (239 aa).

Asp-8 serves as the catalytic Proton acceptor. The active-site Proton donor is Asp-129.

The protein belongs to the HisA/HisF family.

Its subcellular location is the cytoplasm. The catalysed reaction is 1-(5-phospho-beta-D-ribosyl)-5-[(5-phospho-beta-D-ribosylamino)methylideneamino]imidazole-4-carboxamide = 5-[(5-phospho-1-deoxy-D-ribulos-1-ylimino)methylamino]-1-(5-phospho-beta-D-ribosyl)imidazole-4-carboxamide. Its pathway is amino-acid biosynthesis; L-histidine biosynthesis; L-histidine from 5-phospho-alpha-D-ribose 1-diphosphate: step 4/9. In Legionella pneumophila (strain Lens), this protein is 1-(5-phosphoribosyl)-5-[(5-phosphoribosylamino)methylideneamino] imidazole-4-carboxamide isomerase.